A 174-amino-acid chain; its full sequence is Probable carboxylesterase Culp5 (174 aa).

The active-site Nucleophile is serine 67. An intrachain disulfide couples cysteine 137 to cysteine 144. Aspartate 141 is an active-site residue. Histidine 153 functions as the Proton donor/acceptor in the catalytic mechanism.

It belongs to the cutinase family.

Does not exhibit cutinase activity. In Mycobacterium tuberculosis (strain ATCC 25618 / H37Rv), this protein is Probable carboxylesterase Culp5.